Reading from the N-terminus, the 80-residue chain is UPF0270 protein AHA_0994 (80 aa).

The protein belongs to the UPF0270 family.

The protein is UPF0270 protein AHA_0994 of Aeromonas hydrophila subsp. hydrophila (strain ATCC 7966 / DSM 30187 / BCRC 13018 / CCUG 14551 / JCM 1027 / KCTC 2358 / NCIMB 9240 / NCTC 8049).